The sequence spans 490 residues: Sushi domain-containing protein 4 (490 aa).

A disordered region spans residues 1 to 21; it reads MYHGMNPSNGDGFLEQQQQQQ. The signal sequence occupies residues 1 to 41; it reads MYHGMNPSNGDGFLEQQQQQQQPQSPQRLLAVILWFQLALC. Residues 42 to 319 are Extracellular-facing; that stretch reads FGPAQLTGGF…PSTHETLLTT (278 aa). Sushi domains are found at residues 55–119, 120–179, 178–239, and 241–304; these read QVCA…ICVQ, EDCR…ICQG, QGCL…RCLA, and EVCP…YCIK. Intrachain disulfides connect Cys57–Cys99, Cys85–Cys117, Cys122–Cys165, Cys147–Cys177, Cys180–Cys224, Cys210–Cys237, Cys243–Cys289, and Cys274–Cys302. Asn104 and Asn134 each carry an N-linked (GlcNAc...) asparagine glycan. The N-linked (GlcNAc...) asparagine glycan is linked to Asn192. The helical transmembrane segment at 320–340 threads the bilayer; that stretch reads WKIVAFTATSVLLVLLLVILA. The Cytoplasmic segment spans residues 341–490; it reads RMFQTKFKAH…DEIPLMEEDP (150 aa). The segment at 401-490 is disordered; the sequence is GCPLPVDDQS…DEIPLMEEDP (90 aa). Positions 430 to 456 are enriched in polar residues; that stretch reads CDSVSGSSELLQSLYSPPRCQESTHPA. Acidic residues predominate over residues 479-490; that stretch reads IADEIPLMEEDP.

Isoform 3 is the predominant isoform in all tissues except cortex, cerebellum, kidney, and breast. Isoform 1 is found primarily in the esophagus and the brain.

It is found in the membrane. The protein localises to the secreted. Its function is as follows. Acts as a complement inhibitor by disrupting the formation of the classical C3 convertase. Isoform 3 inhibits the classical complement pathway, while membrane-bound isoform 1 inhibits deposition of C3b via both the classical and alternative complement pathways. This Homo sapiens (Human) protein is Sushi domain-containing protein 4 (SUSD4).